Here is a 219-residue protein sequence, read N- to C-terminus: MNVDGPFTASCPVVLASGSPRRQEFLRAMGVPFSVDTAGASEPEPVEGEAAVAYARRAACAKTLPVARRHAAACVIGADTVVALDGVIMGKPAGHAHALSMLRALAGARHEVVSACCICLPGNAQEPVVLHAVTSVWMHRWDDAALKAYIATGEPADKAGAYGIQGIGAFLVSRIDGSWSNVVGLPLTELLTELQRRGVVVPSGAQTAEQDGHAPDVRD.

D79 (proton acceptor) is an active-site residue.

It belongs to the Maf family. YhdE subfamily. The cofactor is a divalent metal cation.

The protein resides in the cytoplasm. The catalysed reaction is dTTP + H2O = dTMP + diphosphate + H(+). It carries out the reaction UTP + H2O = UMP + diphosphate + H(+). Nucleoside triphosphate pyrophosphatase that hydrolyzes dTTP and UTP. May have a dual role in cell division arrest and in preventing the incorporation of modified nucleotides into cellular nucleic acids. The sequence is that of dTTP/UTP pyrophosphatase from Oleidesulfovibrio alaskensis (strain ATCC BAA-1058 / DSM 17464 / G20) (Desulfovibrio alaskensis).